The chain runs to 330 residues: Heat-inducible transcription repressor HrcA (330 aa).

This sequence belongs to the HrcA family.

Functionally, negative regulator of class I heat shock genes (grpE-dnaK-dnaJ and groELS operons). Prevents heat-shock induction of these operons. In Synechococcus sp. (strain RCC307), this protein is Heat-inducible transcription repressor HrcA.